The primary structure comprises 588 residues: Ribonuclease Y (588 aa).

The helical transmembrane segment at 7 to 27 threads the bilayer; the sequence is VLLVAVLLLTVVVVGAVLVGV. Residues 278-359 enclose the KH domain; it reads VVSVLHLPGD…HRIEEVHDLA (82 aa). One can recognise an HD domain in the interval 404 to 497; the sequence is VLKHLVESAH…TQASDACSGG (94 aa).

The protein belongs to the RNase Y family.

The protein resides in the cell membrane. Functionally, endoribonuclease that initiates mRNA decay. This Salinispora tropica (strain ATCC BAA-916 / DSM 44818 / JCM 13857 / NBRC 105044 / CNB-440) protein is Ribonuclease Y.